Consider the following 705-residue polypeptide: MPTNLFFNAHHSPVGAFASFTLGFPGKSGGLDLELARPPRQNVLIGVESLHESGLYHVLPFLETAEEDESKRYDIENPDPNPQKPNILIPFAKEEIQREFHVATDTWKAGDLTFTIYSPVKAVPNPETADEEELKLALVPAVIVEMTIDNTNGTRARRAFFGFEGTDPYTSMRRIDDTCPQLRGVGQGRILSIVSKDEGVRSALHFSMEDILTAQLEENWTFGLGKVGALIVDVPAGEKKTYQFAVCFYRGGYVTAGMDASYFYTRFFQNIEEVGLYALEQAEVLKEQSFRSNKLIEKEWLSDDQTFMMAHAIRSYYGNTQLLEHEGKPIWVVNEGEYRMMNTFDLTVDQLFFELKLNPWTVKNVLDLYVERYSYEDRVRFPGEETEYPSGISFTHDMGVANTFSRPHYSSYELYGISGCFSHMTHEQLVNWVLCAAVYIEQTKDWAWRDKRLAILEQCLESMVRRDHPDPEQRNGVMGLDSTRTMGGAEITTYDSLDVSLGQARNNLYLAGKCWAAYVALEKLFRDVGKEELAALAGEQAEKCAATIVSHVTDDGYIPAIMGEGNDSKIIPAIEGLVFPYFTNCHEALDENGRFGAYIQALRNHLQYVLREGICLFPDGGWKISSTSNNSWLSKIYLCQFIARHILGWEWDEQGKRADAAHVAWLTHPTLSIWSWSDQIIAGEITGSKYYPRGVTSILWLEEGE.

The protein belongs to the glycosyl hydrolase 52 family.

The enzyme catalyses Hydrolysis of (1-&gt;4)-beta-D-xylans, to remove successive D-xylose residues from the non-reducing termini.. It participates in glycan degradation; xylan degradation. The chain is Beta-xylosidase (xylA) from Geobacillus stearothermophilus (Bacillus stearothermophilus).